The following is a 763-amino-acid chain: U3 small nucleolar RNA-associated protein 25 homolog (763 aa).

A disordered region spans residues 1-164 (MGKRRSRGRS…SQKSSEEFTD (164 aa)). Promotes p53/TP53 degradation stretches follow at residues 1-190 (MGKR…SQRT) and 580-642 (VQLP…KKEE). Serine 10 carries the phosphoserine modification. Positions 25–43 (RDFGEEHPFYDRVSKKEVK) are enriched in basic and acidic residues. Residues serine 52, serine 60, and serine 64 each carry the phosphoserine modification. The span at 54 to 70 (DSSHSESESESEQEHVS) shows a compositional bias: basic and acidic residues. The segment covering 84-119 (EEEEEEEEEEEEEEEDKEEVDDSAVGDSEMNGEDGG) has biased composition (acidic residues). Positions 643 to 704 (LNFTHICEYT…YELPTYAHFY (62 aa)) are represses p53/TP53 degradation.

The protein belongs to the UTP25 family. Interacts with CAPN3; the interaction is required for CAPN3 translocation to the nucleolus. Phosphorylated. Phosphorylation is required to promote p53/TP53 degradation in the nucleolus which promotes cell cycle progression and liver development.

The protein resides in the nucleus. Its subcellular location is the nucleolus. Functionally, component of the ribosomal small subunit processome for the biogenesis of ribosomes, functions in pre-ribosomal RNA (pre-rRNA) processing. Essential for embryonic development in part through the regulation of p53 pathway. Controls the expansion growth of digestive organs and liver. Also involved in the sympathetic neuronal development. Mediates, with CAPN3, the proteasome-independent degradation of p53/TP53. This chain is U3 small nucleolar RNA-associated protein 25 homolog, found in Rattus norvegicus (Rat).